Here is an 82-residue protein sequence, read N- to C-terminus: Small ribosomal subunit protein bS16 (82 aa).

The protein belongs to the bacterial ribosomal protein bS16 family.

This is Small ribosomal subunit protein bS16 from Vibrio atlanticus (strain LGP32) (Vibrio splendidus (strain Mel32)).